Consider the following 315-residue polypeptide: Protein ADP-ribosyltransferase (315 aa).

A Deacetylase sirtuin-type domain is found at 13 to 299 (LMDEKTKQAE…TTALRNDSTT (287 aa)). NAD(+) contacts are provided by residues Ala40, 123 to 126 (TNAD), and Gln143. Residues Cys151, Cys155, Cys186, and Cys189 each contribute to the Zn(2+) site. NAD(+) contacts are provided by residues 238 to 240 (YTT), Asn264, Tyr268, and Ile285.

It belongs to the sirtuin family. Class M subfamily. Requires Zn(2+) as cofactor.

It catalyses the reaction L-aspartyl-[protein] + NAD(+) = 4-O-(ADP-D-ribosyl)-L-aspartyl-[protein] + nicotinamide. With respect to regulation, is inhibited by Tenovin-6 in vitro, but not by nicotinamide. In terms of biological role, catalyzes specifically the mono-ADP-ribosylation of GcvH-L (SAV0324). This activity is dependent on prior lipoylation of the target protein. May be involved in the modulation of the response to host-derived oxidative stress. In contrast to other sirtuin classes, lacks protein deacylase activity, being unable to catalyze delipoylation, debiotinylation, deacetylation and desuccinylation of proteins. The polypeptide is Protein ADP-ribosyltransferase (Staphylococcus aureus (strain Mu50 / ATCC 700699)).